Reading from the N-terminus, the 348-residue chain is Holliday junction branch migration complex subunit RuvB (348 aa).

The interval 1 to 183 is large ATPase domain (RuvB-L); that stretch reads MAPQPRRLIA…FGIPIRLEYY (183 aa). Residues Leu-22, Arg-23, Gly-64, Lys-67, Thr-68, Thr-69, 130–132, Arg-173, Tyr-183, and Arg-220 contribute to the ATP site; that span reads EDF. Thr-68 serves as a coordination point for Mg(2+). The tract at residues 184-254 is small ATPAse domain (RuvB-S); that stretch reads TVEELECIVR…VADRALRLLD (71 aa). The head domain (RuvB-H) stretch occupies residues 257–348; that stretch reads HIGLDQMDRR…FQLFSEGGEE (92 aa). DNA contacts are provided by Arg-293, Arg-312, and Arg-317.

This sequence belongs to the RuvB family. Homohexamer. Forms an RuvA(8)-RuvB(12)-Holliday junction (HJ) complex. HJ DNA is sandwiched between 2 RuvA tetramers; dsDNA enters through RuvA and exits via RuvB. An RuvB hexamer assembles on each DNA strand where it exits the tetramer. Each RuvB hexamer is contacted by two RuvA subunits (via domain III) on 2 adjacent RuvB subunits; this complex drives branch migration. In the full resolvosome a probable DNA-RuvA(4)-RuvB(12)-RuvC(2) complex forms which resolves the HJ.

The protein localises to the cytoplasm. The catalysed reaction is ATP + H2O = ADP + phosphate + H(+). In terms of biological role, the RuvA-RuvB-RuvC complex processes Holliday junction (HJ) DNA during genetic recombination and DNA repair, while the RuvA-RuvB complex plays an important role in the rescue of blocked DNA replication forks via replication fork reversal (RFR). RuvA specifically binds to HJ cruciform DNA, conferring on it an open structure. The RuvB hexamer acts as an ATP-dependent pump, pulling dsDNA into and through the RuvAB complex. RuvB forms 2 homohexamers on either side of HJ DNA bound by 1 or 2 RuvA tetramers; 4 subunits per hexamer contact DNA at a time. Coordinated motions by a converter formed by DNA-disengaged RuvB subunits stimulates ATP hydrolysis and nucleotide exchange. Immobilization of the converter enables RuvB to convert the ATP-contained energy into a lever motion, pulling 2 nucleotides of DNA out of the RuvA tetramer per ATP hydrolyzed, thus driving DNA branch migration. The RuvB motors rotate together with the DNA substrate, which together with the progressing nucleotide cycle form the mechanistic basis for DNA recombination by continuous HJ branch migration. Branch migration allows RuvC to scan DNA until it finds its consensus sequence, where it cleaves and resolves cruciform DNA. This chain is Holliday junction branch migration complex subunit RuvB, found in Methylocella silvestris (strain DSM 15510 / CIP 108128 / LMG 27833 / NCIMB 13906 / BL2).